Here is a 38-residue protein sequence, read N- to C-terminus: Photosystem II reaction center protein M (38 aa).

A helical membrane pass occupies residues 7–27 (GFVASILFVLVPSVFLIILYI).

It belongs to the PsbM family. In terms of assembly, PSII is composed of 1 copy each of membrane proteins PsbA, PsbB, PsbC, PsbD, PsbE, PsbF, PsbH, PsbI, PsbJ, PsbK, PsbL, PsbM, PsbT, PsbX, PsbY, PsbZ, Psb30/Ycf12, peripheral proteins PsbO, CyanoQ (PsbQ), PsbU, PsbV and a large number of cofactors. It forms dimeric complexes.

It localises to the cellular thylakoid membrane. Functionally, one of the components of the core complex of photosystem II (PSII). PSII is a light-driven water:plastoquinone oxidoreductase that uses light energy to abstract electrons from H(2)O, generating O(2) and a proton gradient subsequently used for ATP formation. It consists of a core antenna complex that captures photons, and an electron transfer chain that converts photonic excitation into a charge separation. This subunit is found at the monomer-monomer interface. This Nostoc sp. (strain PCC 7120 / SAG 25.82 / UTEX 2576) protein is Photosystem II reaction center protein M.